A 114-amino-acid polypeptide reads, in one-letter code: U-myrmeciitoxin(01)-Mg8a (114 aa).

Residues 1-20 form the signal peptide; it reads MKLSTLLVAFVLLVITVILS. Positions 21 to 44 are excised as a propeptide; that stretch reads TPSTNAKALAESNALAVAVSEAEP.

It belongs to the formicidae venom precursor-01 superfamily. Expressed by the venom gland.

The protein localises to the secreted. Functionally, may have antimicrobial properties, like most ant linear peptides. The chain is U-myrmeciitoxin(01)-Mg8a from Myrmecia gulosa (Red bulldog ant).